A 647-amino-acid polypeptide reads, in one-letter code: Zinc transporter ZIP4 (647 aa).

Residues 1–22 (MASLVSLELGLLLAVLVVTATA) form the signal peptide. Over 23–327 (SPPAGLLSLL…QDQLSQSERY (305 aa)) the chain is Extracellular. Intrachain disulfides connect Cys-57–Cys-62, Cys-65–Cys-111, and Cys-160–Cys-195. The tract at residues 236–255 (EAHSDHSHRHRGASSRDPVP) is disordered. Residue Asn-261 is glycosylated (N-linked (GlcNAc...) asparagine). Cys-270 and Cys-309 form a disulfide bridge. Residues 328-348 (LYGSLATLLICLCAVFGLLLL) traverse the membrane as a helical segment. Residues 349–359 (TCTGCRGVTHY) lie on the Cytoplasmic side of the membrane. A helical membrane pass occupies residues 360 to 380 (ILQTFLSLAVGAVTGDAVLHL). The Extracellular segment spans residues 381-402 (TPKVLGLHTHSEEGLSPQPTWR). A helical membrane pass occupies residues 403 to 423 (LLAMLAGLYAFFLFENLFNLL). Residues 424–498 (LPRDPEDLED…LSPELRLLPY (75 aa)) lie on the Cytoplasmic side of the membrane. The Essential for SLC39A4 endocytosis signature appears at 452–454 (LQL). The tract at residues 458 to 484 (ELRQPKPPHEGSRADLVAEESPELLNP) is disordered. The segment covering 460–470 (RQPKPPHEGSR) has biased composition (basic and acidic residues). The helical transmembrane segment at 499 to 518 (MITLGDAVHNFADGLAVGAA) threads the bilayer. Positions 507, 508, and 511 each coordinate Zn(2+). The Extracellular segment spans residues 519–526 (FASSWKTG). The chain crosses the membrane as a helical span at residues 527 to 553 (LATSLAVFCHELPHELGDFAALLHAGL). Zn(2+) is bound by residues His-536, Glu-537, and His-540. Over 554 to 558 (SVRQA) the chain is Cytoplasmic. Residues 559 to 579 (LLLNLASALTAFAGLYVALAV) form a helical membrane-spanning segment. Residues 580-586 (GVSEESE) lie on the Extracellular side of the membrane. The chain crosses the membrane as a helical span at residues 587 to 607 (AWILAVATGLFLYVALCDMLP). Residues 608-617 (AMLKVRDPRP) lie on the Cytoplasmic side of the membrane. A helical transmembrane segment spans residues 618-638 (WLLFLLHNVGLLGGWTVLLLL). Topologically, residues 639–647 (SLYEDDITF) are extracellular.

It belongs to the ZIP transporter (TC 2.A.5) family. Homodimer; homodimerization is mediated by the transmembrane domain. Post-translationally, the extracellular N-terminal ectodomain is cleaved when cells are Zn(2+) deficient, N-terminally cleaved SLC39A4 is internalized at a faster rate. In terms of processing, under excess Zn(2+) conditions, SLC39A4 on the cell surface is rapidly endocytosed, ubiquitinated and degraded. Glycosylated. As to expression, highly expressed in kidney, small intestine, stomach, colon, jejunum and duodenum.

The protein resides in the cell membrane. It is found in the recycling endosome membrane. The protein localises to the apical cell membrane. It catalyses the reaction Zn(2+)(in) = Zn(2+)(out). With respect to regulation, the Zn(2+) uniporter activity is regulated by zinc availability. Extracellular acidification stimulated SLC39A4-dependent Zn(2+) uptake. Selective transporter that mediates the uptake of Zn(2+). Plays an essential role for dietary zinc uptake from small intestine. The Zn(2+) uniporter activity is regulated by zinc availability. Also exhibits polyspecific binding and transport of Cu(2+), Cd(2+) and possibly Ni(2+) but at higher concentrations. The polypeptide is Zinc transporter ZIP4 (Homo sapiens (Human)).